Here is a 385-residue protein sequence, read N- to C-terminus: Alkanesulfonate monooxygenase (385 aa).

This sequence belongs to the SsuD family.

It carries out the reaction an alkanesulfonate + FMNH2 + O2 = an aldehyde + FMN + sulfite + H2O + 2 H(+). Its function is as follows. Catalyzes the desulfonation of aliphatic sulfonates. The chain is Alkanesulfonate monooxygenase from Paraburkholderia phymatum (strain DSM 17167 / CIP 108236 / LMG 21445 / STM815) (Burkholderia phymatum).